The following is a 425-amino-acid chain: Tyrosine--tRNA ligase (425 aa).

Y34 contacts L-tyrosine. The 'HIGH' region motif lies at P39–N48. L-tyrosine contacts are provided by Y171 and Q175. The short motif at K231–S235 is the 'KMSKS' region element. Residue K234 coordinates ATP. The S4 RNA-binding domain occupies A358 to I424.

It belongs to the class-I aminoacyl-tRNA synthetase family. TyrS type 1 subfamily. In terms of assembly, homodimer.

The protein resides in the cytoplasm. The catalysed reaction is tRNA(Tyr) + L-tyrosine + ATP = L-tyrosyl-tRNA(Tyr) + AMP + diphosphate + H(+). Catalyzes the attachment of tyrosine to tRNA(Tyr) in a two-step reaction: tyrosine is first activated by ATP to form Tyr-AMP and then transferred to the acceptor end of tRNA(Tyr). The polypeptide is Tyrosine--tRNA ligase (Opitutus terrae (strain DSM 11246 / JCM 15787 / PB90-1)).